Here is a 261-residue protein sequence, read N- to C-terminus: Calbindin (261 aa).

Ala-2 is subject to N-acetylalanine. The interaction with RANBP9 stretch occupies residues 2 to 7 (AESHLQ). EF-hand domains follow at residues 11 to 46 (ITAS…LQQA), 53 to 88 (ELSP…EENF), 98 to 133 (KSCE…LLEK), 142 to 177 (KLAE…QENF), and 186 to 221 (MCGK…LCEK). Residues Asp-24, Asp-26, Ser-28, Tyr-30, and Glu-35 each coordinate Ca(2+). Ca(2+) is bound by residues Asp-111, Asp-113, Ser-115, Glu-122, Asp-155, Asn-157, Asp-159, Lys-161, Glu-166, Asp-199, Asp-201, Asn-203, Tyr-205, and Glu-210.

It belongs to the calbindin family. Interacts with RANBP9.

Functionally, buffers cytosolic calcium. May stimulate a membrane Ca(2+)-ATPase and a 3',5'-cyclic nucleotide phosphodiesterase. The chain is Calbindin (CALB1) from Homo sapiens (Human).